The following is a 362-amino-acid chain: Probable S-adenosylmethionine-dependent methyltransferase At5g37970 (362 aa).

Residues Y19, C66, N71, D107, S136, and F137 each contribute to the S-adenosyl-L-homocysteine site. Mg(2+) contacts are provided by N175, E261, and F263.

It belongs to the methyltransferase superfamily. Type-7 methyltransferase family. As to quaternary structure, homodimer. Mg(2+) is required as a cofactor.

In Arabidopsis thaliana (Mouse-ear cress), this protein is Probable S-adenosylmethionine-dependent methyltransferase At5g37970.